The chain runs to 185 residues: Protein GrpE (185 aa).

The interval 1-37 (MSEEKQTPEQEAEVEAQEEAVQADTEEVTQDEQSAFQ) is disordered.

The protein belongs to the GrpE family. Homodimer.

It localises to the cytoplasm. Functionally, participates actively in the response to hyperosmotic and heat shock by preventing the aggregation of stress-denatured proteins, in association with DnaK and GrpE. It is the nucleotide exchange factor for DnaK and may function as a thermosensor. Unfolded proteins bind initially to DnaJ; upon interaction with the DnaJ-bound protein, DnaK hydrolyzes its bound ATP, resulting in the formation of a stable complex. GrpE releases ADP from DnaK; ATP binding to DnaK triggers the release of the substrate protein, thus completing the reaction cycle. Several rounds of ATP-dependent interactions between DnaJ, DnaK and GrpE are required for fully efficient folding. This Bacillus pumilus (strain SAFR-032) protein is Protein GrpE.